The sequence spans 1345 residues: MVYSYSEKKRIRKDFGKRPQVLDIPYLLSIQLDSFKKFTDQDPTGERGLEAAFRSVFPIKSFSGNSELQYVSYKLGEPVFDVKECQIRGVTYSAPLRVKLRMVLYDREAAAGTVKDIKEQEVYMGDIPLMTDNGTFVINGTERVIVSQLHRSPGVFFDHDRGKTHSSGKVLYNARIIPYRGSWLDFEFDPKDALFVRIDRRRKLPATIILRALEYSTQEILDLFFERVEFKIKKDTLVMTLVPERLRGETASYDIKDAEGTVLVEAGRRVTARHIRQLEKTNTTELEVPVEYIVGKYAAQDYIDPDTGEVLVSANSEISLEDLAKLSLAGIKELSTLYINELDHGAYISDTLRIDPTTNRLEALVEIYRMMRPGEPPTKDAAEALFQNLFFSEERYDLSKVGRMKFNRRLSIPDDEGSGVLSKEDIVAVMKNIIHIRNGFDEVDDIDHLGNRRIRSVGEMAENQFRVGLVRVERAVRERLSLGDLNELMPQDLINAKPISAAVKEFFGSSQLSQFMDQNNPLSEVTHKRRISALGPGGLTRERAGFEVRDVHPTHYGRLCPIETPEGPNIGLINSLASFARTNSYGFLETPYRKVVDGVITDDVEYLSAIEEGRYVIAQANIEVDSEGRMVEEQIACRHKGESTFMRASDIQYMDVSPQQIISVAASLIPFLEHDDANRALMGANMQRQAVPTLKSEKPLVGTGIERTLAVDSGVVVAAKRGGVIDYVDASRIVVKVNEDELRPGEAGIDIYNLTKYTRSNQNTCINQRPCCSVGEPVVRGDVLADGPSTDLGDLALGQNMRIAFMPWNGYNFEDSILISERVAQEDRFTTIHIQELSCIARDTKLGSEEITADIPNVGESALSKLDESGIVYIGAEVKGGDILVGKVTPKGETQLTPEEKLLRAIFGEKASDVKDSSLRVPNSVKGTIIDVQVFTRDGVEKDKRAIEIEEMHIAQARKDLGEEFKILEEGVLSRARNLLLSAGFTEAQIAALPRKDVLVQVIDDETKQTELEQLAEQHEELKADFDKKFEIKRRKITQGDDLAPGVLKIVKVYLAVKRTIQPGDKMAGRHGNKGVISKINPIEDMPYDEQGNPVDIVLNPLGVPSRMNIGQVLEVHLGAAAKGIGNKIAAMLEDQREKGLAEVRNYIKQVYELGDEVQQRVDIDSFTDDELLRLANNLKGGIPVATPAFDGAKEKEIKQMLELAGLPTSGQLKLFDGRTGNEFERPVTVGYMYMLKLNHLVDDKMHARSTGSYSLVTQQPLGGKAQFGGQRFGEMEVWALEAYGAAYTLQEMLTVKSDDVNGRTQMYKNIVDGNHQMQPGMPESFNVLLKEIRSLGINIELDQE.

Belongs to the RNA polymerase beta chain family. As to quaternary structure, the RNAP catalytic core consists of 2 alpha, 1 beta, 1 beta' and 1 omega subunit. When a sigma factor is associated with the core the holoenzyme is formed, which can initiate transcription.

The catalysed reaction is RNA(n) + a ribonucleoside 5'-triphosphate = RNA(n+1) + diphosphate. In terms of biological role, DNA-dependent RNA polymerase catalyzes the transcription of DNA into RNA using the four ribonucleoside triphosphates as substrates. This is DNA-directed RNA polymerase subunit beta from Shewanella sp. (strain ANA-3).